The following is a 712-amino-acid chain: Patatin-like phospholipase domain-containing protein NFIA_019760 (712 aa).

Basic and acidic residues predominate over residues 1 to 13 (MTSDEKSATRDIY). Residues 1-21 (MTSDEKSATRDIYDPNTLPDY) form a disordered region. Residues 85–105 (WPFLFTVFAWITVLGFAYTLT) form a helical membrane-spanning segment. Residues 275–466 (LCLSGGATFA…RTDIPIKALN (192 aa)) enclose the PNPLA domain. Positions 306–310 (GTSGG) match the GXSXG motif. Ser-308 functions as the Nucleophile in the catalytic mechanism. The Proton acceptor role is filled by Asp-453. The interval 628–687 (RRRQDRAEEHADRMVERLDQSFPERQSDYKDESHYTEVSDSLSATSSRPHTPDARRSSMF) is disordered. 2 stretches are compositionally biased toward basic and acidic residues: residues 632-646 (DRAE…ERLD) and 652-664 (RQSD…HYTE). Over residues 665-676 (VSDSLSATSSRP) the composition is skewed to polar residues. The segment covering 677-687 (HTPDARRSSMF) has biased composition (basic and acidic residues).

The protein belongs to the PLPL family.

The protein resides in the membrane. In terms of biological role, probable lipid hydrolase. This chain is Patatin-like phospholipase domain-containing protein NFIA_019760, found in Neosartorya fischeri (strain ATCC 1020 / DSM 3700 / CBS 544.65 / FGSC A1164 / JCM 1740 / NRRL 181 / WB 181) (Aspergillus fischerianus).